Reading from the N-terminus, the 268-residue chain is Putative S-adenosyl-L-methionine-dependent methyltransferase MAP_0663 (268 aa).

Residues Asp124 and 153–154 (DL) each bind S-adenosyl-L-methionine.

It belongs to the UPF0677 family.

Exhibits S-adenosyl-L-methionine-dependent methyltransferase activity. This chain is Putative S-adenosyl-L-methionine-dependent methyltransferase MAP_0663, found in Mycolicibacterium paratuberculosis (strain ATCC BAA-968 / K-10) (Mycobacterium paratuberculosis).